The sequence spans 359 residues: Guanine nucleotide-binding protein alpha-4 subunit (359 aa).

A lipid anchor (N-myristoyl glycine) is attached at glycine 2. Residue cysteine 3 is the site of S-palmitoyl cysteine attachment. The G-alpha domain occupies 31–359 (TEVKLLLLGA…RYNLKDCGLF (329 aa)). A G1 motif region spans residues 34 to 47 (KLLLLGAGESGKST). GTP is bound by residues 39-46 (GAGESGKS), 178-184 (LRARVKS), 203-207 (DVGGQ), 272-275 (NKMD), and alanine 331. Serine 46 lines the Mg(2+) pocket. A G2 motif region spans residues 176–184 (DILRARVKS). Residues 199-208 (FRMFDVGGQR) are G3 motif. Positions 268–275 (ILFLNKMD) are G4 motif. Positions 329-334 (TCATDT) are G5 motif.

The protein belongs to the G-alpha family. G(i/o/t/z) subfamily. G proteins are composed of 3 units; alpha, beta and gamma. The alpha chain contains the guanine nucleotide binding site.

Its function is as follows. Guanine nucleotide-binding proteins (G proteins) are involved as modulators or transducers in various transmembrane signaling systems. This is Guanine nucleotide-binding protein alpha-4 subunit (gpa-4) from Caenorhabditis briggsae.